A 238-amino-acid polypeptide reads, in one-letter code: Oxidoreductase dmxR7 (238 aa).

This sequence belongs to the avfA family.

It participates in secondary metabolite biosynthesis. Oxidoreductase; part of the gene cluster that mediates the biosynthesis of the dimeric xanthones cryptosporioptides. The pathway begins with the synthesis of atrochrysone thioester by the polyketide synthase dmx-nrPKS. The atrochrysone carboxyl ACP thioesterase dmxR1 then breaks the thioester bond and releases the atrochrysone carboxylic acid from dmx-nrPKS. Atrochrysone carboxylic acid is decarboxylated by the decarboxylase dmxR15, and oxidized by the anthrone oxygenase dmxR16 to yield emodin. Emodin is then reduced to emodin hydroquinone by the oxidoreductase dmxR7. A-ring reduction by the short chain dehydrogenase dmxR18, dehydration by the scytalone dehydratase-like protein dmxR17 and probable spontaneous re-oxidation, results in overall deoxygenation to chrysophanol. Baeyer-Villiger oxidation by the Baeyer-Villiger monooxygenase (BVMO) dmxR6 then yields monodictylactone in equilibrium with monodictyphenone. In the case of the cryptosporioptides biosynthesis, monodictylactone is reduced at C-12 to an alcohol (by the short chain dehydrogenases dmxR12 or dmxR8) and hydroxylated at C-5 by dmxR9, yielding the electron-rich aromatic which could eliminate H(2)O to form the ortho-quinonemethide, followed by tautomerisation to paraquinone and complete the formal reduction to produce the 10-methylgroup. Conjugate addition of C-4a-OH to the resulting paraquinone by the monooxygenase dmxR10 then gives cyclohexadienone, which is then reduced at C-5 by the short chain dehydrogenase dmxR3 to give the dihydroxanthone. The 6,7-epoxide in the cryptosporioptides could be introduced by the cytochrome P450 monooxygenase dmxL3. The highly reducing PKS dmxL2 manufactures butyrate, which is further carboxylated by dmxL1 to form ethylmalonate. It is not yet clear whether the carboxylation occurs while the butyrate is attached to the ACP of dmxL2, but this unusual fungal metabolite could then be esterified to O-5 by the O-acetyltransferase dmxR13. Finally, dimerization performed by dmxR5 gives the observed dimers cryptosporioptides A, B and C as the final products of the pathway. The polypeptide is Oxidoreductase dmxR7 (Cryptosporiopsis sp. (strain 8999)).